Here is a 461-residue protein sequence, read N- to C-terminus: D-phenylhydantoinase (461 aa).

A divalent metal cation is bound by residues His-59, His-61, and Lys-151. Lys-151 bears the N6-carboxylysine mark. Residue Tyr-156 coordinates substrate. Positions 182 and 239 each coordinate a divalent metal cation. Ser-286 contacts substrate. Residue Asp-313 coordinates a divalent metal cation. Asn-335 serves as a coordination point for substrate.

This sequence belongs to the metallo-dependent hydrolases superfamily. Hydantoinase/dihydropyrimidinase family. In terms of assembly, homotetramer. It depends on a divalent metal cation as a cofactor. Carboxylation allows a single lysine to coordinate two divalent metal cations.

It carries out the reaction D-5-phenylhydantoin + H2O = N-carbamoyl-D-phenylglycine + H(+). In terms of biological role, catalyzes the stereospecific hydrolysis of the cyclic amide bond of D-hydantoin derivatives with an aromatic side chains at the 5'-position. Has no activity on dihydropyrimidines. The physiological function is unknown. The polypeptide is D-phenylhydantoinase (Escherichia coli O6:K15:H31 (strain 536 / UPEC)).